Here is a 698-residue protein sequence, read N- to C-terminus: Polyribonucleotide nucleotidyltransferase (698 aa).

D490 and D496 together coordinate Mg(2+). Positions 558 to 617 (PVIYTMRIPQDKIGALIGPGGKNIKRITETTDTKIDINDDGVVQIAAVNGDKLAMAKAEI) constitute a KH domain. Positions 627–695 (NKIYKGKVVS…NNGKVRLSRK (69 aa)) constitute an S1 motif domain.

This sequence belongs to the polyribonucleotide nucleotidyltransferase family. Requires Mg(2+) as cofactor.

It is found in the cytoplasm. The enzyme catalyses RNA(n+1) + phosphate = RNA(n) + a ribonucleoside 5'-diphosphate. Involved in mRNA degradation. Catalyzes the phosphorolysis of single-stranded polyribonucleotides processively in the 3'- to 5'-direction. The protein is Polyribonucleotide nucleotidyltransferase of Elusimicrobium minutum (strain Pei191).